Reading from the N-terminus, the 119-residue chain is Large ribosomal subunit protein bL20 (119 aa).

It belongs to the bacterial ribosomal protein bL20 family.

Functionally, binds directly to 23S ribosomal RNA and is necessary for the in vitro assembly process of the 50S ribosomal subunit. It is not involved in the protein synthesizing functions of that subunit. The sequence is that of Large ribosomal subunit protein bL20 from Coxiella burnetii (strain CbuK_Q154) (Coxiella burnetii (strain Q154)).